The following is a 130-amino-acid chain: Small ribosomal subunit protein uS9 (130 aa).

The protein belongs to the universal ribosomal protein uS9 family.

In Bacillus thuringiensis subsp. konkukian (strain 97-27), this protein is Small ribosomal subunit protein uS9.